The primary structure comprises 800 residues: MLISNEWLKEYVTIDDSVSNLAERITRTGIEVDDLIDYTKDIKNLVVGFVKSKEKHPDADKLNVCQVDIGEDEPVQIVCGAPNVDAGQYVIVAKVGGRLPGGIKIKRAKLRGERSEGMICSLQEIGISSNYIPKSFESGIYVFSESQVPGTDALQALYLDDQVMEFDLTPNRADALSMIGTAYEVAALYNTKMTKPETTSNELELSANDELTVTIENEDKVPYYSARVVHNVTIEPSPIWMQARLIKAGIRPINNVVDISNYVLLEYGQPLHMFDQDAIGSQQIVVRQANEGEKMTTLDDTERELLTSDIVITNGQTPIALAGVMGGDFSEVKEHTSNIVIEGAIFDSVSIRHTSRRLNLRSESSSRFEKGIATEFVDEAVDRACYLLQTYANGKVLKDRVSSGELGAFITPIDITADKINRTIGFDLSQNDIVTIFNQLGFDTEINDDVITVQVPSRRKDITIKEDLIEEVARIYGYDDIPSTLPVFEKVTSGQLTDRQYKTRMVKEVLEGAGLDQAITYSLVSKEDATAFAMQQRQTIDLLMPMSEAHASLRQSLLPHLIEAASYNVARKNKDVKLFEIGNVFFANGEGELPDQVEYLSGILTGDYVVNQWQGKKETVDFYLAKGVVDRVSEKLNLEFSYRRADIDGLHPGRTAEILLENKVVGFIGELHPTLAADNDLKRTYVFELNFDALMAVSVGYINYQPIPIFPGMSRDIALEVDQNIPAADLLSTIHAHGGNILKDTLVFDVYQGEHLEKGKKSIAIRLNYLDTEETLTDERVSKVQAEIEAALIEQGAVIR.

A tRNA-binding domain is found at 39 to 154; that stretch reads TKDIKNLVVG…ESQVPGTDAL (116 aa). The B5 domain occupies 408-483; that stretch reads AFITPIDITA…RIYGYDDIPS (76 aa). The Mg(2+) site is built by aspartate 461, aspartate 467, glutamate 470, and glutamate 471. An FDX-ACB domain is found at 708–800; sequence PIFPGMSRDI…ALIEQGAVIR (93 aa).

The protein belongs to the phenylalanyl-tRNA synthetase beta subunit family. Type 1 subfamily. Tetramer of two alpha and two beta subunits. Mg(2+) is required as a cofactor.

Its subcellular location is the cytoplasm. The catalysed reaction is tRNA(Phe) + L-phenylalanine + ATP = L-phenylalanyl-tRNA(Phe) + AMP + diphosphate + H(+). The sequence is that of Phenylalanine--tRNA ligase beta subunit from Staphylococcus aureus (strain bovine RF122 / ET3-1).